The chain runs to 412 residues: Probable beta-1,4-xylosyltransferase IRX10 (412 aa).

A helical; Signal-anchor for type II membrane protein membrane pass occupies residues 1-21 (MKIHSCLSAILLFLFFSASSA). The Lumenal portion of the chain corresponds to 22 to 412 (KQNVRTERIS…AGPVADLKPW (391 aa)). Asparagine 139 and asparagine 400 each carry an N-linked (GlcNAc...) asparagine glycan.

It belongs to the glycosyltransferase 47 family. Limited to xylem cells. Expressed in the root tip, xylem cells of roots, and in the vasculature of roots, cotyledons and leaves.

It is found in the golgi apparatus membrane. Its function is as follows. Involved in the synthesis of the hemicellulose glucuronoxylan, a major component of secondary cell walls. Probably involved in the elongation of glucuronoxylan xylosyl backbone, especially in the formation of GlcUA side chain of xylans. This chain is Probable beta-1,4-xylosyltransferase IRX10 (IRX10), found in Arabidopsis thaliana (Mouse-ear cress).